Consider the following 194-residue polypeptide: Adenylate kinase (194 aa).

Residue 10-15 (GAGKGT) participates in ATP binding. The tract at residues 30–59 (STGDMLRAAVAQQSEIGKRAKAVMDAGQLV) is NMP. Residues threonine 31, arginine 36, 57 to 59 (QLV), 85 to 88 (GYPR), and glutamine 92 each bind AMP. The segment at 126–142 (SRVAETIAKGGQVRSDD) is LID. ATP is bound at residue arginine 127. Residues arginine 139 and arginine 150 each coordinate AMP. ATP is bound at residue alanine 178.

The protein belongs to the adenylate kinase family. In terms of assembly, monomer.

It localises to the cytoplasm. It carries out the reaction AMP + ATP = 2 ADP. It participates in purine metabolism; AMP biosynthesis via salvage pathway; AMP from ADP: step 1/1. Functionally, catalyzes the reversible transfer of the terminal phosphate group between ATP and AMP. Plays an important role in cellular energy homeostasis and in adenine nucleotide metabolism. In Brucella anthropi (strain ATCC 49188 / DSM 6882 / CCUG 24695 / JCM 21032 / LMG 3331 / NBRC 15819 / NCTC 12168 / Alc 37) (Ochrobactrum anthropi), this protein is Adenylate kinase.